Reading from the N-terminus, the 371-residue chain is SufE-like protein 1, chloroplastic/mitochondrial (371 aa).

A chloroplast and mitochondrion-targeting transit peptide spans 1–66; that stretch reads MAAAMSSSCC…ISTGIVPPPS (66 aa). The Cysteine persulfide intermediate role is filled by C131. An S-glutathionyl cysteine modification is found at C131. The interval 218-249 is disordered; sequence VKGEEDSSSGESSESSFVSIPETKDEANVPEV.

This sequence belongs to the SufE family. Heterotetramer with NFS2. Interacts with NFS2 and NIFS1. Interacts in vitro with GRXS14, GRXS15, GRXS16 and GRXS17, but not with GRXC5. Interacts in vivo only with GRXS14 and GRXS16. Glutathionylated. Glutathionylation strongly reduces the stimulation of NFS2 activity. As to expression, expressed in roots, leaves, stems and flowers.

The protein resides in the plastid. It is found in the chloroplast stroma. Its subcellular location is the mitochondrion. It functions in the pathway cofactor biosynthesis; iron-sulfur cluster biosynthesis. Functionally, participates in cysteine desulfurization mediated by NFS2 in chloroplast and NIFS1 in mitochondrion. Activates the cysteine desulfurase activity of NFS2. Cysteine desulfurization mobilizes sulfur from L-cysteine to yield L-alanine and supplies the inorganic sulfur for iron-sulfur (Fe-S) cluster formation. Glutaredoxins regulate SUFE1 activity by inducing its reduction and deglutathionylation. The sequence is that of SufE-like protein 1, chloroplastic/mitochondrial from Arabidopsis thaliana (Mouse-ear cress).